The primary structure comprises 404 residues: Multidrug resistance protein MdtG (404 aa).

11 helical membrane-spanning segments follow: residues 19 to 39 (LGCFLTGAAFSLVMPFLPLYV), 56 to 76 (LVFSITFLFSAIASPFWGGLA), 90 to 110 (LGMAIVMLLMGMAQNIWQFLI), 113 to 133 (ALLGLLGGFIPNANALIATQV), 144 to 164 (TLSTGGVSGALLGPLAGGLLA), 171 to 191 (PVFFITASVLFICFLLTFFFI), 222 to 242 (LFVTTLIIQVATGSIAPILTL), 254 to 274 (IAFISGMIASVPGVAALLSAP), 288 to 308 (ILIVALIISVLLLIPMSFVQT), 317 to 337 (FLLGAADGALLPAVQTLLVYN), and 376 to 396 (AVFCVTAGVVLFNAIYSWNSL).

Belongs to the major facilitator superfamily. DHA1 family. MdtG (TC 2.A.1.2.20) subfamily.

Its subcellular location is the cell inner membrane. The protein is Multidrug resistance protein MdtG of Salmonella schwarzengrund (strain CVM19633).